We begin with the raw amino-acid sequence, 333 residues long: cGAMP-activated phospholipase (333 aa).

A PNPLA domain is found at 10-191 (LALSGGGYRG…VGNAPGLFGL (182 aa)). The short motif at 14 to 19 (GGGYRG) is the GXGXXG element. Positions 46–50 (GTSAG) match the GXSXG motif. Catalysis depends on Ser-48, which acts as the Nucleophile. Catalysis depends on Asp-178, which acts as the Proton acceptor. Positions 178 to 180 (DGG) match the DGA/G motif.

Belongs to the patatin family.

The catalysed reaction is a 1,2-diacyl-sn-glycero-3-phosphocholine + H2O = a 2-acyl-sn-glycero-3-phosphocholine + a fatty acid + H(+). The enzyme catalyses 1,2-di-(9Z-octadecenoyl)-sn-glycero-3-phosphoethanolamine + 2 H2O = sn-glycero-3-phosphoethanolamine + 2 (9Z)-octadecenoate + 2 H(+). Phospholipase activity is specifically activated upon cGAMP binding, which is produced by the cognate cyclic nucleotide synthase encoded in the same operon. Is not activated by cyclic dinucleotides 2',3'-cGAMP, c-diAMP or 3',3'-c-diGMP. Functionally, effector phospholipase of a CBASS antiviral system. CBASS (cyclic oligonucleotide-based antiphage signaling system) provides immunity against bacteriophages. The CD-NTase protein (CdnA) synthesizes cyclic nucleotides in response to infection; these serve as specific second messenger signals. The signals activate a diverse range of effectors, leading to bacterial cell death and thus abortive phage infection. A type II-A(GA) CBASS system. Phospholipase that is activated upon binding to the cyclic dinucleotide (CDN) second messenger 3',3'-cyclic GMP-AMP (cGAMP). Degrades phospholipids in the cell membrane. Its function is as follows. The capV-cdnA-cap2-cap3 operon provides about 10(4)-fold protection in strain BWHPSA011 against infection by phage PaMx41. In P.aeruginosa strain PAO1 it confers protection against phages PaMx41 and JBD18 but not JBD67 (JBD18 and JBD67 do not replicate in BWHPSA011 / Pa011). When acb2 in JBD67 is deleted this CBASS operon then protects against JDB67 also. This CBASS system limits prophage induction of lysogenized JBD67 as well as viral lytic replication. The chain is cGAMP-activated phospholipase from Pseudomonas aeruginosa (strain BWHPSA011 / Pa011).